A 92-amino-acid polypeptide reads, in one-letter code: uncharacterized protein (92 aa).

This is an uncharacterized protein from Homo sapiens (Human).